We begin with the raw amino-acid sequence, 606 residues long: Atypical protein kinase C (606 aa).

The region spanning 30-113 is the PB1 domain; that stretch reads SITVKTAYNG…SQLVIHVFPN (84 aa). The Phorbol-ester/DAG-type zinc finger occupies 145–195; sequence GHIFQAKRFNRRAFCAYCQDRIWGLGRQGFKCIQCKLLVHKKCHKLVQKHC. The region spanning 264 to 532 is the Protein kinase domain; it reads FELIRVIGRG…FMDIVSHPFF (269 aa). ATP contacts are provided by residues 270-278 and Lys293; that span reads IGRGSYAKV. The active-site Proton acceptor is Asp388. Residues 533–604 form the AGC-kinase C-terminal domain; it reads KNMDWELLER…VNPLLMSLED (72 aa).

This sequence belongs to the protein kinase superfamily. AGC Ser/Thr protein kinase family. PKC subfamily. As to quaternary structure, interacts with baz; the interaction is required for apical localization of aPKC in neuroblasts and epithelial cells. Interacts with Dap160; the interaction promotes aPKC apical localization and kinase activity. Interacts with and phosphorylates l(2)gl and yrt. Interacts with crb and ref(2)P. Forms a complex with baz, fz and Patj. Expressed in the testis. In spermatid cysts, localizes near the tips of spermatid flagellar axonemes (at protein level). Detectable in freshly laid eggs before onset of zygotic transcription so is deposited in the egg during oogenesis. At the cellular blastoderm stage, present in all cells except the pole cells. During gastrulation, strongly expressed in tissues undergoing morphogenetic movements such as invaginating mesoderm, proctodeum and cephalic furrow. Strongly expressed in neuroblasts.

The protein resides in the cytoplasm. The protein localises to the cell cortex. It is found in the apicolateral cell membrane. It carries out the reaction L-seryl-[protein] + ATP = O-phospho-L-seryl-[protein] + ADP + H(+). The enzyme catalyses L-threonyl-[protein] + ATP = O-phospho-L-threonyl-[protein] + ADP + H(+). Its function is as follows. Serine/threonine protein kinase which is required for apico-basal cell polarity in the germ line as well as in epithelial and neural precursor cells, for epithelial planar cell polarity and for cell proliferation. During oocyte development, required for the posterior translocation of oocyte specification factors and for the posterior establishment of the microtubule organizing center within the presumptive oocyte. Phosphorylates l(2)gl which restricts l(2)gl activity to the oocyte posterior and regulates posterior enrichment of par-1, leading to establishment of correct oocyte polarity. Essential for apical localization of l(2)gl and par-6 in neuroblasts and for exclusion of mira from the apical cortex. Phosphorylates baz which is required for targeting of baz to the postsynaptic region where it is involved in actin organization, and for apical exclusion of baz which is necessary for establishment of the apical/lateral border in epithelial cells. Phosphorylates yrt which prevents its premature apical localization and is necessary for correct epithelial cell polarization. Required for the establishment of mitotic spindle orientation during symmetric division of epithelial cells and for apical exclusion of raps/Pins. Involved in symmetric adherens junction positioning during embryogenesis. Required for polarization of the spermatid cyst which is necessary for sperm differentiation. Required for stimulation of the Toll signaling pathway which activates Dif and dl and plays a role in innate immunity. Plays a role in memory enhancement. This is Atypical protein kinase C from Drosophila melanogaster (Fruit fly).